The primary structure comprises 278 residues: Elongation factor Ts (278 aa).

The segment at Thr-80–Val-83 is involved in Mg(2+) ion dislocation from EF-Tu.

Belongs to the EF-Ts family.

The protein resides in the cytoplasm. Associates with the EF-Tu.GDP complex and induces the exchange of GDP to GTP. It remains bound to the aminoacyl-tRNA.EF-Tu.GTP complex up to the GTP hydrolysis stage on the ribosome. The polypeptide is Elongation factor Ts (Pseudarthrobacter chlorophenolicus (strain ATCC 700700 / DSM 12829 / CIP 107037 / JCM 12360 / KCTC 9906 / NCIMB 13794 / A6) (Arthrobacter chlorophenolicus)).